Consider the following 152-residue polypeptide: Endoribonuclease YbeY (152 aa).

H101, H105, and H111 together coordinate Zn(2+). A disordered region spans residues 132–152 (PSSLIERTTKPAKKAAKRKKR). Residues 141-152 (KPAKKAAKRKKR) are compositionally biased toward basic residues.

It belongs to the endoribonuclease YbeY family. Requires Zn(2+) as cofactor.

The protein localises to the cytoplasm. Its function is as follows. Single strand-specific metallo-endoribonuclease involved in late-stage 70S ribosome quality control and in maturation of the 3' terminus of the 16S rRNA. This chain is Endoribonuclease YbeY, found in Koribacter versatilis (strain Ellin345).